The sequence spans 54 residues: uncharacterized protein (54 aa).

This is an uncharacterized protein from Escherichia coli (strain K12).